Reading from the N-terminus, the 854-residue chain is Fibronectin-binding protein PlpA (854 aa).

Residues 1 to 24 show a composition bias toward low complexity; that stretch reads MDNNQNNFNQPGQQGFDQYQQQSG. Positions 1–33 are disordered; the sequence is MDNNQNNFNQPGQQGFDQYQQQSGALVSYGYDA. The fibronectin-binding stretch occupies residues 91 to 109; the sequence is QYNQQQNQGYEQQYDEYGN. Disordered regions lie at residues 247–327, 411–434, 743–766, and 835–854; these read YEQE…LEAP, SSNNELKTTNQQLKTSNEALEDSN, TINPPQPQPQALPQPHPQPQQLPP, and IQPSFRRRGGRAKFDPYNNR. A compositionally biased stretch (basic and acidic residues) spans 258 to 267; the sequence is EPAHEQDLRE. 2 stretches are compositionally biased toward polar residues: residues 311–320 and 411–428; these read TVNQPDQTPI and SSNNELKTTNQQLKTSNE. Residues 384 to 622 are a coiled coil; the sequence is NLEEIQKVKL…SSFQKALSEV (239 aa). Residues 746-764 show a composition bias toward pro residues; it reads PPQPQPQALPQPHPQPQQL.

It is found in the cell membrane. Binds immobilized fibronectin, specifically the gelatin/heparin-binding domain. The chain is Fibronectin-binding protein PlpA (plpA) from Mycoplasmoides gallisepticum (strain R(low / passage 15 / clone 2)) (Mycoplasma gallisepticum).